Here is a 428-residue protein sequence, read N- to C-terminus: ATP-dependent RNA helicase RhlB (428 aa).

The Q motif motif lies at 9 to 37 (QKFSDFALHPLVVEALENKGFQYCTPIQA). The Helicase ATP-binding domain occupies 40-219 (LPLTLSGRDV…FEQMNNAEYV (180 aa)). 53–60 (AQTGTGKT) serves as a coordination point for ATP. The short motif at 165 to 168 (DEAD) is the DEAD box element. One can recognise a Helicase C-terminal domain in the interval 245–390 (RLLQTLIEEE…VSKYNSDALL (146 aa)). Residues 394 to 428 (PAPKRLARTRTGNGPRRNSAPRRSGAPRNNRKRPG) form a disordered region.

Belongs to the DEAD box helicase family. RhlB subfamily. As to quaternary structure, component of the RNA degradosome, which is a multiprotein complex involved in RNA processing and mRNA degradation.

The protein resides in the cytoplasm. The enzyme catalyses ATP + H2O = ADP + phosphate + H(+). DEAD-box RNA helicase involved in RNA degradation. Has RNA-dependent ATPase activity and unwinds double-stranded RNA. In Yersinia pseudotuberculosis serotype O:1b (strain IP 31758), this protein is ATP-dependent RNA helicase RhlB.